Here is a 326-residue protein sequence, read N- to C-terminus: Cytosolic Fe-S cluster assembly factor NBP35 (326 aa).

Residues 1 to 38 form a disordered region; sequence MTEIANGQQILPPDYTLKEPEPEHCPGPESENAGKGDS. Residues 16-26 are compositionally biased toward basic and acidic residues; the sequence is TLKEPEPEHCP. Positions 25, 39, 42, and 48 each coordinate [4Fe-4S] cluster. 78-85 serves as a coordination point for ATP; it reads GKGGVGKS. Positions 251 and 254 each coordinate [4Fe-4S] cluster.

This sequence belongs to the Mrp/NBP35 ATP-binding proteins family. NUBP1/NBP35 subfamily. Heterotetramer of 2 NBP35 and 2 CFD1 chains. [4Fe-4S] cluster serves as cofactor.

It localises to the cytoplasm. The protein localises to the nucleus. In terms of biological role, component of the cytosolic iron-sulfur (Fe/S) protein assembly (CIA) machinery. Required for maturation of extramitochondrial Fe-S proteins. The NBP35-CFD1 heterotetramer forms a Fe-S scaffold complex, mediating the de novo assembly of an Fe-S cluster and its transfer to target apoproteins. Required for biogenesis and export of both ribosomal subunits, which may reflect a role in assembly of the Fe/S clusters in RLI1, a protein which performs rRNA processing and ribosome export. This chain is Cytosolic Fe-S cluster assembly factor NBP35, found in Kluyveromyces lactis (strain ATCC 8585 / CBS 2359 / DSM 70799 / NBRC 1267 / NRRL Y-1140 / WM37) (Yeast).